A 76-amino-acid polypeptide reads, in one-letter code: DNA-directed RNA polymerase subunit omega (76 aa).

The protein belongs to the RNA polymerase subunit omega family. As to quaternary structure, in cyanobacteria the RNAP catalytic core is composed of 2 alpha, 1 beta, 1 beta', 1 gamma and 1 omega subunit. When a sigma factor is associated with the core the holoenzyme is formed, which can initiate transcription.

The enzyme catalyses RNA(n) + a ribonucleoside 5'-triphosphate = RNA(n+1) + diphosphate. Promotes RNA polymerase assembly. Latches the N- and C-terminal regions of the beta' subunit thereby facilitating its interaction with the beta and alpha subunits. The chain is DNA-directed RNA polymerase subunit omega (rpoZ) from Synechocystis sp. (strain ATCC 27184 / PCC 6803 / Kazusa).